Here is a 151-residue protein sequence, read N- to C-terminus: Ribosome maturation factor RimP (151 aa).

The protein belongs to the RimP family.

Its subcellular location is the cytoplasm. Functionally, required for maturation of 30S ribosomal subunits. The sequence is that of Ribosome maturation factor RimP from Shewanella sediminis (strain HAW-EB3).